The following is a 383-amino-acid chain: Probable butyrate kinase (383 aa).

This sequence belongs to the acetokinase family.

It localises to the cytoplasm. The catalysed reaction is butanoate + ATP = butanoyl phosphate + ADP. The protein is Probable butyrate kinase of Deinococcus radiodurans (strain ATCC 13939 / DSM 20539 / JCM 16871 / CCUG 27074 / LMG 4051 / NBRC 15346 / NCIMB 9279 / VKM B-1422 / R1).